A 103-amino-acid chain; its full sequence is Large ribosomal subunit protein bL21 (103 aa).

The protein belongs to the bacterial ribosomal protein bL21 family. As to quaternary structure, part of the 50S ribosomal subunit. Contacts protein L20.

This protein binds to 23S rRNA in the presence of protein L20. This is Large ribosomal subunit protein bL21 from Mycolicibacterium smegmatis (strain ATCC 700084 / mc(2)155) (Mycobacterium smegmatis).